A 184-amino-acid polypeptide reads, in one-letter code: Protein N-terminal glutamine amidohydrolase (184 aa).

Residues Cys-14, His-63, and Asp-78 contribute to the active site.

It belongs to the NTAQ1 family. Monomer.

The enzyme catalyses N-terminal L-glutaminyl-[protein] + H2O = N-terminal L-glutamyl-[protein] + NH4(+). In terms of biological role, mediates the side-chain deamidation of N-terminal glutamine residues to glutamate, an important step in N-end rule pathway of protein degradation. Conversion of the resulting N-terminal glutamine to glutamate renders the protein susceptible to arginylation, polyubiquitination and degradation as specified by the N-end rule. Does not act on substrates with internal or C-terminal glutamine and does not act on non-glutamine residues in any position. The chain is Protein N-terminal glutamine amidohydrolase from Caenorhabditis elegans.